We begin with the raw amino-acid sequence, 101 residues long: CRISPR-associated endoribonuclease Cas2 (101 aa).

Residue Asp-17 coordinates Mg(2+).

It belongs to the CRISPR-associated endoribonuclease Cas2 protein family. In terms of assembly, homodimer, forms a heterotetramer with a Cas1 homodimer. Mg(2+) is required as a cofactor.

In terms of biological role, CRISPR (clustered regularly interspaced short palindromic repeat), is an adaptive immune system that provides protection against mobile genetic elements (viruses, transposable elements and conjugative plasmids). CRISPR clusters contain sequences complementary to antecedent mobile elements and target invading nucleic acids. CRISPR clusters are transcribed and processed into CRISPR RNA (crRNA). Functions as a ssRNA-specific endoribonuclease. Involved in the integration of spacer DNA into the CRISPR cassette. The chain is CRISPR-associated endoribonuclease Cas2 from Methanopyrus kandleri (strain AV19 / DSM 6324 / JCM 9639 / NBRC 100938).